Here is a 91-residue protein sequence, read N- to C-terminus: Large ribosomal subunit protein uL23 (91 aa).

Belongs to the universal ribosomal protein uL23 family. As to quaternary structure, part of the 50S ribosomal subunit. Contacts protein L29, and trigger factor when it is bound to the ribosome.

In terms of biological role, one of the early assembly proteins it binds 23S rRNA. One of the proteins that surrounds the polypeptide exit tunnel on the outside of the ribosome. Forms the main docking site for trigger factor binding to the ribosome. The sequence is that of Large ribosomal subunit protein uL23 from Staphylococcus haemolyticus (strain JCSC1435).